The chain runs to 74 residues: Conotoxin Vi15a (74 aa).

The first 19 residues, 1–19 (MMPVILLLLLSLAIRCADG), serve as a signal peptide directing secretion. The propeptide occupies 20–43 (KAVQGDSDPSASLLTGDKNHDLPV). Residue Trp72 is modified to Tryptophan amide.

In terms of processing, contains four disulfide bonds. In terms of tissue distribution, expressed by the venom duct.

The protein localises to the secreted. This is Conotoxin Vi15a from Conus virgo (Virgin cone).